We begin with the raw amino-acid sequence, 1220 residues long: DNA-directed RNA polymerase subunit beta' (1220 aa).

Residues Cys-61, Cys-63, Cys-76, and Cys-79 each contribute to the Zn(2+) site. Residues Asp-450, Asp-452, and Asp-454 each contribute to the Mg(2+) site. The interval 1197 to 1220 is disordered; the sequence is QPESESEEASDIPKLDDVAKTFDN. Basic and acidic residues predominate over residues 1207–1220; the sequence is DIPKLDDVAKTFDN.

It belongs to the RNA polymerase beta' chain family. The RNAP catalytic core consists of 2 alpha, 1 beta, 1 beta' and 1 omega subunit. When a sigma factor is associated with the core the holoenzyme is formed, which can initiate transcription. Mg(2+) is required as a cofactor. The cofactor is Zn(2+).

It catalyses the reaction RNA(n) + a ribonucleoside 5'-triphosphate = RNA(n+1) + diphosphate. Its function is as follows. DNA-dependent RNA polymerase catalyzes the transcription of DNA into RNA using the four ribonucleoside triphosphates as substrates. This chain is DNA-directed RNA polymerase subunit beta', found in Leuconostoc mesenteroides subsp. mesenteroides (strain ATCC 8293 / DSM 20343 / BCRC 11652 / CCM 1803 / JCM 6124 / NCDO 523 / NBRC 100496 / NCIMB 8023 / NCTC 12954 / NRRL B-1118 / 37Y).